Consider the following 140-residue polypeptide: 6,7-dimethyl-8-ribityllumazine synthase (140 aa).

Residues F11, 43 to 45 (SFD), and 67 to 69 (CVI) contribute to the 5-amino-6-(D-ribitylamino)uracil site. 72 to 73 (DT) provides a ligand contact to (2S)-2-hydroxy-3-oxobutyl phosphate. H75 (proton donor) is an active-site residue. Residue L100 participates in 5-amino-6-(D-ribitylamino)uracil binding. R115 serves as a coordination point for (2S)-2-hydroxy-3-oxobutyl phosphate.

This sequence belongs to the DMRL synthase family. In terms of assembly, forms an icosahedral capsid composed of 60 subunits, arranged as a dodecamer of pentamers.

The catalysed reaction is (2S)-2-hydroxy-3-oxobutyl phosphate + 5-amino-6-(D-ribitylamino)uracil = 6,7-dimethyl-8-(1-D-ribityl)lumazine + phosphate + 2 H2O + H(+). It participates in cofactor biosynthesis; riboflavin biosynthesis; riboflavin from 2-hydroxy-3-oxobutyl phosphate and 5-amino-6-(D-ribitylamino)uracil: step 1/2. Functionally, catalyzes the formation of 6,7-dimethyl-8-ribityllumazine by condensation of 5-amino-6-(D-ribitylamino)uracil with 3,4-dihydroxy-2-butanone 4-phosphate. This is the penultimate step in the biosynthesis of riboflavin. In Methanococcus vannielii (strain ATCC 35089 / DSM 1224 / JCM 13029 / OCM 148 / SB), this protein is 6,7-dimethyl-8-ribityllumazine synthase.